A 267-amino-acid chain; its full sequence is Eukaryotic translation initiation factor 3 subunit J (267 aa).

The disordered stretch occupies residues 1-70 (MSWNDDDVFA…KDKKSSTDQV (70 aa)). Residues 24 to 38 (WDAEEPIMESWDAEE) are compositionally biased toward acidic residues. The segment covering 39 to 66 (TPAKKETSPKPDSKKNAKKDSKKDKKSS) has biased composition (basic and acidic residues). Residues 192–220 (IESIRQSIATLNVLMKDKEREERRARLAK) are a coiled coil.

Belongs to the eIF-3 subunit J family. Component of the eukaryotic translation initiation factor 3 (eIF-3) complex.

Its subcellular location is the cytoplasm. Functionally, component of the eukaryotic translation initiation factor 3 (eIF-3) complex, which is involved in protein synthesis of a specialized repertoire of mRNAs and, together with other initiation factors, stimulates binding of mRNA and methionyl-tRNAi to the 40S ribosome. The eIF-3 complex specifically targets and initiates translation of a subset of mRNAs involved in cell proliferation. The sequence is that of Eukaryotic translation initiation factor 3 subunit J from Vanderwaltozyma polyspora (strain ATCC 22028 / DSM 70294 / BCRC 21397 / CBS 2163 / NBRC 10782 / NRRL Y-8283 / UCD 57-17) (Kluyveromyces polysporus).